The following is a 414-amino-acid chain: Serine--tRNA ligase (414 aa).

Position 230–232 (230–232 (TSE)) interacts with L-serine. ATP is bound at residue 261–263 (RQE). E284 contacts L-serine. 348–351 (EISS) contacts ATP. Residue S382 coordinates L-serine.

Belongs to the class-II aminoacyl-tRNA synthetase family. Type-1 seryl-tRNA synthetase subfamily. In terms of assembly, homodimer. The tRNA molecule binds across the dimer.

The protein localises to the cytoplasm. It catalyses the reaction tRNA(Ser) + L-serine + ATP = L-seryl-tRNA(Ser) + AMP + diphosphate + H(+). It carries out the reaction tRNA(Sec) + L-serine + ATP = L-seryl-tRNA(Sec) + AMP + diphosphate + H(+). Its pathway is aminoacyl-tRNA biosynthesis; selenocysteinyl-tRNA(Sec) biosynthesis; L-seryl-tRNA(Sec) from L-serine and tRNA(Sec): step 1/1. In terms of biological role, catalyzes the attachment of serine to tRNA(Ser). Is also able to aminoacylate tRNA(Sec) with serine, to form the misacylated tRNA L-seryl-tRNA(Sec), which will be further converted into selenocysteinyl-tRNA(Sec). The sequence is that of Serine--tRNA ligase from Campylobacter fetus subsp. fetus (strain 82-40).